Reading from the N-terminus, the 171-residue chain is 3-hydroxydecanoyl-[acyl-carrier-protein] dehydratase (171 aa).

Residue H70 is part of the active site.

It belongs to the thioester dehydratase family. FabA subfamily. As to quaternary structure, homodimer.

Its subcellular location is the cytoplasm. The enzyme catalyses a (3R)-hydroxyacyl-[ACP] = a (2E)-enoyl-[ACP] + H2O. It carries out the reaction (3R)-hydroxydecanoyl-[ACP] = (2E)-decenoyl-[ACP] + H2O. The catalysed reaction is (2E)-decenoyl-[ACP] = (3Z)-decenoyl-[ACP]. Its pathway is lipid metabolism; fatty acid biosynthesis. Functionally, necessary for the introduction of cis unsaturation into fatty acids. Catalyzes the dehydration of (3R)-3-hydroxydecanoyl-ACP to E-(2)-decenoyl-ACP and then its isomerization to Z-(3)-decenoyl-ACP. Can catalyze the dehydratase reaction for beta-hydroxyacyl-ACPs with saturated chain lengths up to 16:0, being most active on intermediate chain length. The sequence is that of 3-hydroxydecanoyl-[acyl-carrier-protein] dehydratase from Shewanella sediminis (strain HAW-EB3).